The sequence spans 342 residues: uncharacterized protein (342 aa).

Zn(2+) is bound by residues cysteine 41, histidine 63, cysteine 94, cysteine 97, cysteine 100, cysteine 108, and glutamate 149.

It belongs to the zinc-containing alcohol dehydrogenase family. Zn(2+) serves as cofactor.

This is an uncharacterized protein from Haemophilus influenzae (strain ATCC 51907 / DSM 11121 / KW20 / Rd).